The sequence spans 448 residues: Probable glycine dehydrogenase (decarboxylating) subunit 1 (448 aa).

The protein belongs to the GcvP family. N-terminal subunit subfamily. The glycine cleavage system is composed of four proteins: P, T, L and H. In this organism, the P 'protein' is a heterodimer of two subunits.

It carries out the reaction N(6)-[(R)-lipoyl]-L-lysyl-[glycine-cleavage complex H protein] + glycine + H(+) = N(6)-[(R)-S(8)-aminomethyldihydrolipoyl]-L-lysyl-[glycine-cleavage complex H protein] + CO2. Its function is as follows. The glycine cleavage system catalyzes the degradation of glycine. The P protein binds the alpha-amino group of glycine through its pyridoxal phosphate cofactor; CO(2) is released and the remaining methylamine moiety is then transferred to the lipoamide cofactor of the H protein. This chain is Probable glycine dehydrogenase (decarboxylating) subunit 1, found in Parvibaculum lavamentivorans (strain DS-1 / DSM 13023 / NCIMB 13966).